Here is a 441-residue protein sequence, read N- to C-terminus: Velvet complex subunit B (441 aa).

2 stretches are compositionally biased toward polar residues: residues 1–14 and 60–75; these read MNPG…QPGH and MMQQ…STTE. Residues 1–104 are disordered; it reads MNPGYSSTAS…QPHVGEQDGR (104 aa). In terms of domain architecture, Velvet spans 100–426; it reads EQDGRKYRLD…AGQGIKIPIR (327 aa).

This sequence belongs to the velvet family. VelB subfamily. In terms of assembly, component of the heterotrimeric velvet complex composed of LAEA, VEA and VELB; VEA acting as a bridging protein between LAEA and VELB. Forms a heterodimeric complex with VOSA; the formation of the VELB-VOSA complex is light-dependent.

It is found in the nucleus. It localises to the cytoplasm. Component of the velvet transcription factor complex that controls sexual/asexual developmental ratio in response to light, promoting sexual development in the darkness while stimulating asexual sporulation under illumination. The velvet complex acts as a global regulator for secondary metabolite gene expression. Component of the VELB-VOSA heterodimeric complex that plays a dual role in activating genes associated with spore maturation and repressing certain development-associated genes. The VELB-VOSA complex binds DNA through the DNA-binding domain of VOSA that recognizes an 11-nucleotide consensus sequence 5'-CTGGCCGCGGC-3' consisting of two motifs in the promoters of key developmental regulatory genes. Involved in the regulation of the response to eactive oxygen species (ROS) stress. The sequence is that of Velvet complex subunit B from Pyricularia oryzae (strain 70-15 / ATCC MYA-4617 / FGSC 8958) (Rice blast fungus).